A 241-amino-acid polypeptide reads, in one-letter code: Golgi-associated RAB2 interactor protein 6 (241 aa).

Belongs to the GARIN family.

This is Golgi-associated RAB2 interactor protein 6 from Homo sapiens (Human).